The following is a 937-amino-acid chain: Isoleucine--tRNA ligase (937 aa).

Positions 57-67 (PYANGPIHMGH) match the 'HIGH' region motif. Residue E556 participates in L-isoleucyl-5'-AMP binding. The short motif at 597-601 (KMSKS) is the 'KMSKS' region element. Residue K600 coordinates ATP. Positions 895, 898, 915, and 918 each coordinate Zn(2+).

Belongs to the class-I aminoacyl-tRNA synthetase family. IleS type 1 subfamily. As to quaternary structure, monomer. Zn(2+) is required as a cofactor.

The protein resides in the cytoplasm. The enzyme catalyses tRNA(Ile) + L-isoleucine + ATP = L-isoleucyl-tRNA(Ile) + AMP + diphosphate. Its function is as follows. Catalyzes the attachment of isoleucine to tRNA(Ile). As IleRS can inadvertently accommodate and process structurally similar amino acids such as valine, to avoid such errors it has two additional distinct tRNA(Ile)-dependent editing activities. One activity is designated as 'pretransfer' editing and involves the hydrolysis of activated Val-AMP. The other activity is designated 'posttransfer' editing and involves deacylation of mischarged Val-tRNA(Ile). The protein is Isoleucine--tRNA ligase of Levilactobacillus brevis (strain ATCC 367 / BCRC 12310 / CIP 105137 / JCM 1170 / LMG 11437 / NCIMB 947 / NCTC 947) (Lactobacillus brevis).